A 485-amino-acid chain; its full sequence is NADH-quinone oxidoreductase subunit N (485 aa).

14 consecutive transmembrane segments (helical) span residues 8–28 (LIAL…MLSI), 35–55 (FLNA…LWFV), 71–91 (GFAM…CTFA), 105–125 (FYLL…ANHL), 127–147 (SLFL…GYAF), 159–179 (YTIL…LVYA), 203–223 (LLAG…LVPF), 235–255 (PAPV…GVVM), 271–291 (VVLA…ALSQ), 297–317 (LLGY…IALQ), 326–346 (VGVY…VVSL), 373–393 (AAVM…LGFI), 408–430 (WWLV…RVAV), and 455–475 (IVVL…QPLI).

Belongs to the complex I subunit 2 family. As to quaternary structure, NDH-1 is composed of 13 different subunits. Subunits NuoA, H, J, K, L, M, N constitute the membrane sector of the complex.

The protein resides in the cell inner membrane. The enzyme catalyses a quinone + NADH + 5 H(+)(in) = a quinol + NAD(+) + 4 H(+)(out). NDH-1 shuttles electrons from NADH, via FMN and iron-sulfur (Fe-S) centers, to quinones in the respiratory chain. The immediate electron acceptor for the enzyme in this species is believed to be ubiquinone. Couples the redox reaction to proton translocation (for every two electrons transferred, four hydrogen ions are translocated across the cytoplasmic membrane), and thus conserves the redox energy in a proton gradient. This is NADH-quinone oxidoreductase subunit N from Shigella flexneri.